A 726-amino-acid chain; its full sequence is Uracil catabolism protein 2 (726 aa).

Residues 24–53 (CGVCRKFKTRCDFEPLVGKCHRCNVLRLEC) constitute a DNA-binding region (zn(2)-C6 fungal-type). 2 disordered regions span residues 152 to 183 (AGMG…FVNG) and 629 to 681 (SGRL…SGAD). Residues 161–170 (YDDDDDGDDD) are compositionally biased toward acidic residues. Positions 640-679 (RGSPSMTPGFQQSVQSSSALQGSKAGSPQSARSVNSQGSG) are enriched in polar residues.

It belongs to the URC2 family.

The protein resides in the nucleus. Functionally, probable transcriptional activator involved in uracil catabolism. In Lachancea kluyveri (Yeast), this protein is Uracil catabolism protein 2 (URC2).